The sequence spans 257 residues: Protein YIPF5 (257 aa).

Topologically, residues 1–124 are cytoplasmic; it reads MSGFDNFNTD…KASDGSIMNE (124 aa). A helical transmembrane segment spans residues 125 to 145; that stretch reads TDLAGPMVFCLAFGATLLLTG. Lys-146 is a topological domain (lumenal). Residues 147 to 167 form a helical membrane-spanning segment; it reads IQFGYVYGISAIGCLGMYCLL. The Cytoplasmic portion of the chain corresponds to 168 to 173; that stretch reads NLMSMT. Residues 174-194 traverse the membrane as a helical segment; the sequence is GVSFGCVASVLGYCLLPMIIL. The Lumenal portion of the chain corresponds to 195-196; the sequence is SS. The chain crosses the membrane as a helical span at residues 197-217; it reads FGVIFSLQGIMGIILTAAIIG. Over 218–236 the chain is Cytoplasmic; it reads WCSLSASKIFISALAMDGQ. Residues 237 to 257 form a helical membrane-spanning segment; sequence QLLVAYPCALLYGVFALISVF.

Belongs to the YIP1 family.

It localises to the endoplasmic reticulum membrane. Its subcellular location is the golgi apparatus. It is found in the cis-Golgi network membrane. Functionally, plays a role in transport between endoplasmic reticulum and Golgi. The sequence is that of Protein YIPF5 (yipf5) from Danio rerio (Zebrafish).